We begin with the raw amino-acid sequence, 290 residues long: 4-diphosphocytidyl-2-C-methyl-D-erythritol kinase (290 aa).

K13 is a catalytic residue. ATP is bound at residue 93–103 (PVQAGLGGGSA). D135 is a catalytic residue.

The protein belongs to the GHMP kinase family. IspE subfamily.

The catalysed reaction is 4-CDP-2-C-methyl-D-erythritol + ATP = 4-CDP-2-C-methyl-D-erythritol 2-phosphate + ADP + H(+). It participates in isoprenoid biosynthesis; isopentenyl diphosphate biosynthesis via DXP pathway; isopentenyl diphosphate from 1-deoxy-D-xylulose 5-phosphate: step 3/6. Functionally, catalyzes the phosphorylation of the position 2 hydroxy group of 4-diphosphocytidyl-2C-methyl-D-erythritol. This chain is 4-diphosphocytidyl-2-C-methyl-D-erythritol kinase, found in Desulfitobacterium hafniense (strain Y51).